The sequence spans 61 residues: Small ribosomal subunit protein uS14 (61 aa).

C24, C27, C40, and C43 together coordinate Zn(2+).

The protein belongs to the universal ribosomal protein uS14 family. Zinc-binding uS14 subfamily. In terms of assembly, part of the 30S ribosomal subunit. Contacts proteins S3 and S10. Requires Zn(2+) as cofactor.

Functionally, binds 16S rRNA, required for the assembly of 30S particles and may also be responsible for determining the conformation of the 16S rRNA at the A site. In Clostridium novyi (strain NT), this protein is Small ribosomal subunit protein uS14.